Here is a 313-residue protein sequence, read N- to C-terminus: MDSPSQHGSHTSLVVIQPPAVEGRQRLDYDRDTQPATILSLDQIKAIRGSNEYTEGPSVARRPAPRTAPRPEKQERTHEIIPANVNSSYEHRPASHPGNARGSVLSRSTSTGSAASSGSSSSVSSEQGLLGRSPPTRPIPGHRSDRVIRTQPKQLLVEDLKASLKEDPTQHKFICEQCGKCKCGECTAPRALPSCLACDRQCLCSAESMVEYGTCMCLVKGIFYHCSNDDDGGSYSDNPCSCSQSHCCSRYLCMGALSLCLPCLLCYPPAKGCLKLCRGCYDWTHRPGCRCRNSNTVYCKLESCPSRAQGKLS.

An N-acetylmethionine modification is found at M1. The interval 43 to 152 is disordered; that stretch reads QIKAIRGSNE…RSDRVIRTQP (110 aa). Residues 69–79 show a composition bias toward basic and acidic residues; it reads PRPEKQERTHE. Over residues 106–125 the composition is skewed to low complexity; it reads SRSTSTGSAASSGSSSSVSS. An SPR domain is found at 177–289; that stretch reads QCGKCKCGEC…CYDWTHRPGC (113 aa).

The protein belongs to the sprouty family. Forms heterodimers with SPRY2. Interacts with TESK1. Interacts with CAV1 (via C-terminus).

Its subcellular location is the cytoplasm. It is found in the membrane. Functionally, inhibits fibroblast growth factor (FGF)-induced retinal lens fiber differentiation, probably by inhibiting FGF-mediated phosphorylation of ERK1/2. Inhibits TGFB-induced epithelial-to-mesenchymal transition in lens epithelial cells. In Mus musculus (Mouse), this protein is Protein sprouty homolog 1 (Spry1).